The primary structure comprises 223 residues: Octanoyltransferase (223 aa).

In terms of domain architecture, BPL/LPL catalytic spans 35-214 (GEARELIWLL…HFPAMLAGLR (180 aa)). Residues 74 to 81 (RGGRYTYH), 145 to 147 (AIG), and 158 to 160 (GFS) contribute to the substrate site. Cys176 functions as the Acyl-thioester intermediate in the catalytic mechanism.

The protein belongs to the LipB family.

It is found in the cytoplasm. It catalyses the reaction octanoyl-[ACP] + L-lysyl-[protein] = N(6)-octanoyl-L-lysyl-[protein] + holo-[ACP] + H(+). It participates in protein modification; protein lipoylation via endogenous pathway; protein N(6)-(lipoyl)lysine from octanoyl-[acyl-carrier-protein]: step 1/2. Catalyzes the transfer of endogenously produced octanoic acid from octanoyl-acyl-carrier-protein onto the lipoyl domains of lipoate-dependent enzymes. Lipoyl-ACP can also act as a substrate although octanoyl-ACP is likely to be the physiological substrate. This is Octanoyltransferase from Rhizorhabdus wittichii (strain DSM 6014 / CCUG 31198 / JCM 15750 / NBRC 105917 / EY 4224 / RW1) (Sphingomonas wittichii).